The sequence spans 203 residues: SCO2-like protein RT0576 (203 aa).

A Thioredoxin domain is found at 42 to 203 (KDNIKIGEAF…KEIMEFLRNE (162 aa)). Cys80, Cys84, and His170 together coordinate Cu cation.

Belongs to the SCO1/2 family.

The protein is SCO2-like protein RT0576 of Rickettsia typhi (strain ATCC VR-144 / Wilmington).